The following is a 445-amino-acid chain: MAYFPNIGKIAYEGPESRNPFAFKFYNPEEKVGGKTMEEHLRFSVAYWHTFTGDGSDPFGVGNMIRPWDKYSGMDLAKARVEAAFELFEKLNVPFFCFHDVDIAPEGETLSETYKNLDEIVDMIEEYMKTSKTKLLWNTANLFSHPRFVHGAATSCNADVFAYAAAKVKKGLEIAKRLGAENYVFWGGREGYETLLNTDMKLELDNLARFFHMAVDYAKEIGFDGQFLIEPKPKEPTKHQYDFDVATALAFLQTYGLKDYFKFNIEANHATLAGHTFEHELRVARIHGMLGSVDANQGDMLLGWDTDEFPTDLYATTLAMYEILQNGGLGRGGLNFDAKVRRGSFEPEDLFYAHIAGMDSFAIGLKVAHRLLEDRVFEQFIEERYKSYTEGIGREIVEGTADFHKLEQYALQLGEIRNTSGRLERLKTLLNQYLLEVSVPSKARL.

Catalysis depends on residues histidine 99 and aspartate 102. Mg(2+) is bound by residues glutamate 230, glutamate 266, histidine 269, aspartate 294, aspartate 305, aspartate 307, and aspartate 337.

It belongs to the xylose isomerase family. As to quaternary structure, homotetramer. Mg(2+) is required as a cofactor.

The protein localises to the cytoplasm. The enzyme catalyses alpha-D-xylose = alpha-D-xylulofuranose. The polypeptide is Xylose isomerase (Geobacillus thermodenitrificans (strain NG80-2)).